The following is a 162-amino-acid chain: tRNA (cytidine(34)-2'-O)-methyltransferase (162 aa).

S-adenosyl-L-methionine is bound by residues Leu83, Gly105, Ile127, and Ser135.

This sequence belongs to the class IV-like SAM-binding methyltransferase superfamily. RNA methyltransferase TrmH family. TrmL subfamily. Homodimer.

It localises to the cytoplasm. The catalysed reaction is cytidine(34) in tRNA + S-adenosyl-L-methionine = 2'-O-methylcytidine(34) in tRNA + S-adenosyl-L-homocysteine + H(+). It carries out the reaction 5-carboxymethylaminomethyluridine(34) in tRNA(Leu) + S-adenosyl-L-methionine = 5-carboxymethylaminomethyl-2'-O-methyluridine(34) in tRNA(Leu) + S-adenosyl-L-homocysteine + H(+). Functionally, methylates the ribose at the nucleotide 34 wobble position in the two leucyl isoacceptors tRNA(Leu)(CmAA) and tRNA(Leu)(cmnm5UmAA). Catalyzes the methyl transfer from S-adenosyl-L-methionine to the 2'-OH of the wobble nucleotide. The sequence is that of tRNA (cytidine(34)-2'-O)-methyltransferase from Yersinia pestis.